Reading from the N-terminus, the 326-residue chain is F-box/LRR-repeat protein 12 (326 aa).

The F-box domain occupies 1–47; the sequence is MATFADLPDSVLLEIFSYLPVRDRIRISRVCHHWKKLVDDRWLWRHV. LRR repeat units lie at residues 51–78, 86–111, 161–185, 186–211, 212–236, 237–261, and 266–291; these read LYTM…RMGG, APQL…CLHV, VPAF…VLGG, TYRV…EVLG, CTLS…IRLT, VRGL…CLLG, and PEMP…ELQG.

As to quaternary structure, interacts with SKP1 and CUL1.

Its pathway is protein modification; protein ubiquitination. Its function is as follows. Substrate-recognition component of the SCF (SKP1-CUL1-F-box protein)-type E3 ubiquitin ligase complex. Mediates the polyubiquitination and proteasomal degradation of CAMK1 leading to disruption of cyclin D1/CDK4 complex assembly which results in G1 cell cycle arrest in lung epithelia. In Bos taurus (Bovine), this protein is F-box/LRR-repeat protein 12 (FBXL12).